Reading from the N-terminus, the 230-residue chain is Orotate phosphoribosyltransferase (230 aa).

Residues R107, K108, K111, H113, and 133-141 contribute to the 5-phospho-alpha-D-ribose 1-diphosphate site; that span reads EDLTTAGGS. Position 137 (T137) interacts with orotate.

The protein belongs to the purine/pyrimidine phosphoribosyltransferase family. PyrE subfamily. As to quaternary structure, homodimer. Mg(2+) serves as cofactor.

The enzyme catalyses orotidine 5'-phosphate + diphosphate = orotate + 5-phospho-alpha-D-ribose 1-diphosphate. The protein operates within pyrimidine metabolism; UMP biosynthesis via de novo pathway; UMP from orotate: step 1/2. Its function is as follows. Catalyzes the transfer of a ribosyl phosphate group from 5-phosphoribose 1-diphosphate to orotate, leading to the formation of orotidine monophosphate (OMP). The sequence is that of Orotate phosphoribosyltransferase from Allorhizobium ampelinum (strain ATCC BAA-846 / DSM 112012 / S4) (Agrobacterium vitis (strain S4)).